We begin with the raw amino-acid sequence, 295 residues long: Ribosomal protein L11 methyltransferase (295 aa).

S-adenosyl-L-methionine-binding residues include Thr150, Gly171, Asp193, and Asn232.

Belongs to the methyltransferase superfamily. PrmA family.

The protein resides in the cytoplasm. The catalysed reaction is L-lysyl-[protein] + 3 S-adenosyl-L-methionine = N(6),N(6),N(6)-trimethyl-L-lysyl-[protein] + 3 S-adenosyl-L-homocysteine + 3 H(+). Methylates ribosomal protein L11. The sequence is that of Ribosomal protein L11 methyltransferase from Neisseria gonorrhoeae (strain ATCC 700825 / FA 1090).